The sequence spans 322 residues: Follistatin-A (322 aa).

Positions Met-1–Ala-32 are cleaved as a signal peptide. The TB domain maps to Gly-33–Gly-106. Cystine bridges form between Cys-35-Cys-58, Cys-45-Cys-91, Cys-59-Cys-94, Cys-98-Cys-109, Cys-103-Cys-119, Cys-121-Cys-153, Cys-125-Cys-146, and Cys-135-Cys-167. N-linked (GlcNAc...) asparagine glycosylation is present at Asn-75. Residues Thr-97 to Val-120 enclose the Follistatin-like 1 domain. Kazal-like domains follow at residues Cys-103–Lys-169, Asn-189–Lys-244, and Arg-267–Cys-321. Residue Asn-127 is glycosylated (N-linked (GlcNAc...) asparagine). In terms of domain architecture, Follistatin-like 2 spans Thr-170–Val-193. 3 cysteine pairs are disulfide-bonded: Cys-195-Cys-228, Cys-199-Cys-221, and Cys-210-Cys-242. The Follistatin-like 3 domain maps to Ser-247–Ala-271. Cystine bridges form between Cys-273-Cys-305, Cys-277-Cys-298, and Cys-287-Cys-319. Asn-291 carries an N-linked (GlcNAc...) asparagine glycan.

Monomer. In terms of tissue distribution, not expressed in the organizer region. Expression in gastrulating embryos is confined to anterior and paraxial regions, which give rise to head mesoderm and the first five somites. In addition, expressed transiently in a subset of cells in the posterior notochord anlage. Later, expression is seen in brain, eyes and somites.

In terms of biological role, binds directly to activin and functions as an activin antagonist. Specific inhibitor of the biosynthesis and secretion of pituitary follicle stimulating hormone (fsh). Inhibits bmp-signaling during later stages of development including late phases of dorsoventral patterning, to refine the early pattern set up by the interaction of chordino and bmp2/4. Not involved in organizer function or early phases of dorsoventral pattern formation. This is Follistatin-A (fsta) from Danio rerio (Zebrafish).